Reading from the N-terminus, the 304-residue chain is uncharacterized protein (304 aa).

The protein belongs to the histone deacetylase family.

Functionally, putative deacetylase. This is an uncharacterized protein from Synechocystis sp. (strain ATCC 27184 / PCC 6803 / Kazusa).